The primary structure comprises 316 residues: Melanocyte-stimulating hormone receptor (316 aa).

Residues 1 to 37 (MPMQGAQRKLLGSLNSTPTATSNLGLAANHTGAPCLE) are Extracellular-facing. N29 carries an N-linked (GlcNAc...) asparagine glycan. Residues 38 to 63 (VSIPDGLFLSLGLVSLVENVLVVAAI) traverse the membrane as a helical segment. Residues 64 to 72 (AKNRNLHSS) lie on the Cytoplasmic side of the membrane. A helical transmembrane segment spans residues 73 to 93 (MYCFICCLALSDLLVSGSNML). Residues 94-118 (ETAVILLLETGALATRTSVVQQLHN) are Extracellular-facing. A helical transmembrane segment spans residues 119–140 (TINVLTCSSMLCSLCFLGAIAV). Residues 141 to 163 (DRYISIFYALRYHSIMTLPRAQR) lie on the Cytoplasmic side of the membrane. The helical transmembrane segment at 164-183 (AIAAIWVASVLSSTLFITYY) threads the bilayer. The Extracellular portion of the chain corresponds to 184–191 (DHAAVLLC). A helical membrane pass occupies residues 192–211 (LVVFFLAMLVLMAVLYVHML). The Cytoplasmic segment spans residues 212 to 240 (ARACQHAHGIIRLHKRQTPAHQAFGLRGA). Residues 241-266 (ATLTILLGIFFLCWGPFFLHLTLVVF) traverse the membrane as a helical segment. Over 267–279 (CPQHLTCSCIFKN) the chain is Extracellular. The chain crosses the membrane as a helical span at residues 280–300 (FKVFLTLIICNTIIDPLIYAF). Over 301 to 316 (RSQELRRTLKEVLCSW) the chain is Cytoplasmic. C314 carries S-palmitoyl cysteine lipidation.

It belongs to the G-protein coupled receptor 1 family. In terms of assembly, interacts with MGRN1, but does not undergo MGRN1-mediated ubiquitination; this interaction competes with GNAS-binding and thus inhibits agonist-induced cAMP production. Interacts with OPN3; the interaction results in a decrease in MC1R-mediated cAMP signaling and ultimately a decrease in melanin production in melanocytes.

Its subcellular location is the cell membrane. In terms of biological role, receptor for MSH (alpha, beta and gamma) and ACTH. The activity of this receptor is mediated by G proteins which activate adenylate cyclase. Mediates melanogenesis, the production of eumelanin (black/brown) and phaeomelanin (red/yellow), via regulation of cAMP signaling in melanocytes. This is Melanocyte-stimulating hormone receptor (MC1R) from Saguinus geoffroyi (Geoffroy's tamarin).